A 68-amino-acid polypeptide reads, in one-letter code: Guanine nucleotide-binding protein G(I)/G(S)/G(O) subunit gamma-10 (68 aa).

Ser2 carries the post-translational modification N-acetylserine. Cysteine methyl ester is present on Cys65. A lipid anchor (S-geranylgeranyl cysteine) is attached at Cys65. Residues 66–68 (ALL) constitute a propeptide, removed in mature form.

It belongs to the G protein gamma family. In terms of assembly, g proteins are composed of 3 units, alpha, beta and gamma. Abundantly and ubiquitously expressed.

The protein resides in the cell membrane. Guanine nucleotide-binding proteins (G proteins) are involved as a modulator or transducer in various transmembrane signaling systems. The beta and gamma chains are required for the GTPase activity, for replacement of GDP by GTP, and for G protein-effector interaction. Interacts with beta-1 and beta-2, but not with beta-3. This Homo sapiens (Human) protein is Guanine nucleotide-binding protein G(I)/G(S)/G(O) subunit gamma-10 (GNG10).